Reading from the N-terminus, the 122-residue chain is Large ribosomal subunit protein uL14c (122 aa).

The protein belongs to the universal ribosomal protein uL14 family. In terms of assembly, part of the 50S ribosomal subunit.

The protein resides in the plastid. The protein localises to the chloroplast. Its function is as follows. Binds to 23S rRNA. The polypeptide is Large ribosomal subunit protein uL14c (Cycas taitungensis (Prince sago)).